Here is a 344-residue protein sequence, read N- to C-terminus: L-rhamnose-proton symporter (344 aa).

A run of 10 helical transmembrane segments spans residues 4–24 (AITMGIFWHLIGAASAACFYA), 38–58 (WSVGGIVSWIILPWAISALLL), 68–88 (FSLSTLLPVFLFGAMWGIGNI), 101–121 (MGIGIAIGITLIVGTLMTPII), 137–157 (TLLGVLVALIGVGIVTRAGQL), 175–195 (LVLAVMCGIFSAGMSFAMNAA), 214–234 (LPSYVIIMGGGAIINLGFCFI), 259–279 (VLLSALGGLMWYLQFFFYAWG), 290–310 (ISWMLHMSFYVLCGGIVGLVL), and 323–343 (VLSLGCVVIIVAANIVGIGMA).

Belongs to the L-rhamnose transporter (TC 2.A.7.6) family.

Its subcellular location is the cell inner membrane. It catalyses the reaction L-rhamnopyranose(in) + H(+)(in) = L-rhamnopyranose(out) + H(+)(out). Its function is as follows. Uptake of L-rhamnose across the cytoplasmic membrane with the concomitant transport of protons into the cell (symport system). The polypeptide is L-rhamnose-proton symporter (Escherichia coli (strain 55989 / EAEC)).